Here is a 141-residue protein sequence, read N- to C-terminus: Nucleoside diphosphate kinase (141 aa).

ATP-binding residues include Lys11, Phe59, Arg87, Thr93, Arg104, and Asn114. The Pros-phosphohistidine intermediate role is filled by His117.

Belongs to the NDK family. In terms of assembly, homotetramer. Mg(2+) serves as cofactor.

It is found in the cytoplasm. It catalyses the reaction a 2'-deoxyribonucleoside 5'-diphosphate + ATP = a 2'-deoxyribonucleoside 5'-triphosphate + ADP. The catalysed reaction is a ribonucleoside 5'-diphosphate + ATP = a ribonucleoside 5'-triphosphate + ADP. In terms of biological role, major role in the synthesis of nucleoside triphosphates other than ATP. The ATP gamma phosphate is transferred to the NDP beta phosphate via a ping-pong mechanism, using a phosphorylated active-site intermediate. In Burkholderia thailandensis (strain ATCC 700388 / DSM 13276 / CCUG 48851 / CIP 106301 / E264), this protein is Nucleoside diphosphate kinase.